Reading from the N-terminus, the 338-residue chain is UDP-3-O-acylglucosamine N-acyltransferase (338 aa).

Histidine 239 (proton acceptor) is an active-site residue.

It belongs to the transferase hexapeptide repeat family. LpxD subfamily. Homotrimer.

The catalysed reaction is a UDP-3-O-[(3R)-3-hydroxyacyl]-alpha-D-glucosamine + a (3R)-hydroxyacyl-[ACP] = a UDP-2-N,3-O-bis[(3R)-3-hydroxyacyl]-alpha-D-glucosamine + holo-[ACP] + H(+). Its pathway is bacterial outer membrane biogenesis; LPS lipid A biosynthesis. Its function is as follows. Catalyzes the N-acylation of UDP-3-O-acylglucosamine using 3-hydroxyacyl-ACP as the acyl donor. Is involved in the biosynthesis of lipid A, a phosphorylated glycolipid that anchors the lipopolysaccharide to the outer membrane of the cell. In Xylella fastidiosa (strain 9a5c), this protein is UDP-3-O-acylglucosamine N-acyltransferase.